Consider the following 186-residue polypeptide: UPF0301 protein CGSHiEE_01530 (186 aa).

The protein belongs to the UPF0301 (AlgH) family.

The sequence is that of UPF0301 protein CGSHiEE_01530 from Haemophilus influenzae (strain PittEE).